Consider the following 561-residue polypeptide: Liver carboxylesterase 1F (561 aa).

The N-terminal stretch at 1–18 (MCLSFLFLVSLATCVVYG) is a signal peptide. The N-linked (GlcNAc...) asparagine glycan is linked to asparagine 79. Cysteine 87 and cysteine 116 are disulfide-bonded. Serine 221 functions as the Acyl-ester intermediate in the catalytic mechanism. A disulfide bond links cysteine 273 and cysteine 284. Catalysis depends on charge relay system residues glutamate 353 and histidine 466. Positions 558–561 (HNEL) match the Prevents secretion from ER motif.

This sequence belongs to the type-B carboxylesterase/lipase family. In terms of tissue distribution, expressed in liver and kidney.

The protein localises to the lipid droplet. The protein resides in the cytoplasm. It is found in the cytosol. Its subcellular location is the endoplasmic reticulum. It localises to the microsome. The catalysed reaction is a carboxylic ester + H2O = an alcohol + a carboxylate + H(+). It catalyses the reaction all-trans-retinyl hexadecanoate + H2O = all-trans-retinol + hexadecanoate + H(+). Functionally, involved in the detoxification of xenobiotics and in the activation of ester and amide prodrugs. Hydrolyzes retinyl esters. Hydrolyzes p-nitrophenyl butyrate (PNPB), triacylglycerol and monoacylglycerol. Shows higher activity against PNPB, a short-chain fatty acid ester, than against triolein, a long-chain fatty acid ester. Shows no detectable activity against diacylglycerol, cholesterol ester or phospholipids. May play a role in adipocyte lipolysis. The chain is Liver carboxylesterase 1F from Rattus norvegicus (Rat).